The primary structure comprises 616 residues: Auxin efflux carrier component 4 (616 aa).

Over 1–7 (MITWHDL) the chain is Extracellular. Residues 8-28 (YTVLTAVVPLYVAMILAYGSV) traverse the membrane as a helical segment. Topologically, residues 29 to 38 (QWWKIFSPDQ) are cytoplasmic. Residues 39 to 59 (CSGINRFVAIFAVPLLSFHFI) form a helical membrane-spanning segment. A (indol-3-yl)acetate-binding site is contributed by Val51. At 60–70 (STNDPYAMNFR) the chain is on the extracellular side. Residues 71–91 (FVAADTLQKIIMLVLLALWAN) traverse the membrane as a helical segment. Residues 92-101 (LTKNGSLEWM) are Cytoplasmic-facing. Residues 102–122 (ITIFSLSTLPNTLVMGIPLLI) form a helical membrane-spanning segment. (indol-3-yl)acetate contacts are provided by Asn112 and Leu114. The Extracellular segment spans residues 123-131 (AMYGTYAGS). The helical transmembrane segment at 132–152 (LMVQVVVLQCIIWYTLLLFLF) threads the bilayer. (indol-3-yl)acetate is bound at residue Tyr145. Topologically, residues 153–476 (EYRGAKLLIM…LIRNPNTYSS (324 aa)) are cytoplasmic. Residues Ser223, Ser240, and Ser280 each carry the phosphoserine modification. Residues 302 to 343 (AAGSYPAPNPEFSTGTGVSTKPNKIPKENQQQLQEKDSKASH) are disordered. The span at 312–334 (EFSTGTGVSTKPNKIPKENQQQL) shows a compositional bias: polar residues. 2 positions are modified to phosphoserine: Ser358 and Ser395. Positions 390 to 411 (DQPRKSNARGGGDDIGGLDSGE) are disordered. Over residues 398-409 (RGGGDDIGGLDS) the composition is skewed to gly residues. Residues 477–497 (LIGLIWALVAYRWHVAMPKIL) form a helical membrane-spanning segment. Topologically, residues 498 to 500 (QQS) are extracellular. The helical transmembrane segment at 501–521 (ISILSDAGLGMAMFSLGLFMA) threads the bilayer. Residues 522–535 (LQPKIIACGNSVAT) lie on the Cytoplasmic side of the membrane. A helical transmembrane segment spans residues 536-556 (FAMAVRFITGPAIMAVAGIAI). Residues 557–561 (GLHGD) are Extracellular-facing. The helical transmembrane segment at 562 to 582 (LLRIAIVQAALPQGIVPFVFA) threads the bilayer. (indol-3-yl)acetate contacts are provided by Ile576 and Val577. Topologically, residues 583–595 (KEYNVHPTILSTG) are cytoplasmic. Residues 596–616 (VIFGMLIALPITLVYYILLGL) traverse the membrane as a helical segment.

Belongs to the auxin efflux carrier (TC 2.A.69.1) family. In terms of assembly, homodimer. In terms of tissue distribution, expressed in the quiescent center precursors and surrounding cells. Present in columella cells of primary roots. Detected in pollen.

The protein resides in the cell membrane. Functionally, acts as a component of the auxin efflux carrier. Plays a role in generating a sink for auxin into columella cells. Maintains the endogenous auxin gradient, which is essential for correct root patterning. Involved in EXO70A3-regulated gravitropic responses in columella cells and in root system architecture (RSA). Together with PIN3 and PIN7, involved in the connective auxin transport (CAT) that ensures communication across the shoot system, and modulates strigolactone-mediated shoot branching control. The abcb19 pin3 pin4 pin7 quadruple mutant exhibits an additive phenotype on strigolactone-mediated bud outgrowth responses and shoot branching control. The protein is Auxin efflux carrier component 4 of Arabidopsis thaliana (Mouse-ear cress).